The chain runs to 595 residues: Potassium-transporting ATPase potassium-binding subunit (595 aa).

A run of 10 helical transmembrane segments spans residues 9-29 (ICGY…YMAA), 63-83 (TGYA…VYAL), 135-155 (GLTV…VALI), 177-197 (ILHI…GQGV), 285-305 (FLEM…FGVM), 312-332 (GWVI…VTVL), 412-432 (GLYG…LMIG), 451-471 (AIVI…AVML), 516-536 (LMLG…VLAI), and 560-580 (FVGL…IPAL).

This sequence belongs to the KdpA family. As to quaternary structure, the system is composed of three essential subunits: KdpA, KdpB and KdpC.

It is found in the cell inner membrane. Functionally, part of the high-affinity ATP-driven potassium transport (or Kdp) system, which catalyzes the hydrolysis of ATP coupled with the electrogenic transport of potassium into the cytoplasm. This subunit binds the periplasmic potassium ions and delivers the ions to the membrane domain of KdpB through an intramembrane tunnel. The sequence is that of Potassium-transporting ATPase potassium-binding subunit from Methylococcus capsulatus (strain ATCC 33009 / NCIMB 11132 / Bath).